A 386-amino-acid polypeptide reads, in one-letter code: 4-hydroxy-3-methylbut-2-en-1-yl diphosphate synthase (flavodoxin) (386 aa).

Residues Cys281, Cys284, Cys316, and Glu323 each contribute to the [4Fe-4S] cluster site.

The protein belongs to the IspG family. Requires [4Fe-4S] cluster as cofactor.

It carries out the reaction (2E)-4-hydroxy-3-methylbut-2-enyl diphosphate + oxidized [flavodoxin] + H2O + 2 H(+) = 2-C-methyl-D-erythritol 2,4-cyclic diphosphate + reduced [flavodoxin]. The protein operates within isoprenoid biosynthesis; isopentenyl diphosphate biosynthesis via DXP pathway; isopentenyl diphosphate from 1-deoxy-D-xylulose 5-phosphate: step 5/6. Converts 2C-methyl-D-erythritol 2,4-cyclodiphosphate (ME-2,4cPP) into 1-hydroxy-2-methyl-2-(E)-butenyl 4-diphosphate. In Corynebacterium jeikeium (strain K411), this protein is 4-hydroxy-3-methylbut-2-en-1-yl diphosphate synthase (flavodoxin).